A 953-amino-acid polypeptide reads, in one-letter code: 26S proteasome non-ATPase regulatory subunit 1 (953 aa).

Position 1 is an N-acetylmethionine (M1). Position 273 is a phosphothreonine (T273). Residues 277 to 319 (SVPGSTNTGTVPGSEKDSDPMETEEKTASAVAGKTPDASPEPK) form a disordered region. Residue S290 is modified to Phosphoserine. Positions 290–303 (SEKDSDPMETEEKT) are enriched in basic and acidic residues. Position 310 is an N6-acetyllysine (K310). T311 bears the Phosphothreonine mark. Phosphoserine is present on S315. PC repeat units lie at residues 403–436 (TATASLGVIHKGHEKEALQLMATYLPKDTSPGSA), 441–474 (GGLYALGLIHANHGGDIIDYLLNQLKNASNDIVR), 476–510 (GGSLGLGLAAMGTARQDVYDLLKTNLYQDDAVTGE), 511–545 (AAGLALGLVMLGSKNAQAIEDMVGYAQETQHEKIL), 547–580 (GLAVGIALVMYGRMEEADALIESLCRDKDPILRR), 581–616 (SGMYTVAMAYCGSGNNKAIRRLLHVAVSDVNDDVRR), 617–649 (AAVESLGFILFRTPEQCPSVVSLLSESYNPHVR), 651–685 (GAAMALGICCAGTGNKEAINLLEPMTNDPVNYVRQ), 686–726 (GALI…DVMA), and 729–761 (GAILAQGILDAGGHNVTISLQSRTGHTHMPSVV). K720 is modified (N6-acetyllysine). Position 830 is a phosphothreonine (T830). Residue S834 is modified to Phosphoserine. 2 disordered regions span residues 839 to 881 (AKKK…LDNP) and 930 to 953 (AHGPKIEEEEQEPEPPEPFEYIDD). 2 stretches are compositionally biased toward basic and acidic residues: residues 842-852 (KEKEKEKKEEE) and 859-872 (AEKKEEKEKKKEPE). Over residues 936-953 (EEEEQEPEPPEPFEYIDD) the composition is skewed to acidic residues.

This sequence belongs to the proteasome subunit S1 family. Component of the 19S proteasome regulatory particle complex. The 26S proteasome consists of a 20S core particle (CP) and two 19S regulatory subunits (RP). The regulatory particle is made of a lid composed of 9 subunits, a base containing 6 ATPases and few additional components including PSMD1. Interacts with ADRM1. Interacts with ZFAND1.

Component of the 26S proteasome, a multiprotein complex involved in the ATP-dependent degradation of ubiquitinated proteins. This complex plays a key role in the maintenance of protein homeostasis by removing misfolded or damaged proteins, which could impair cellular functions, and by removing proteins whose functions are no longer required. Therefore, the proteasome participates in numerous cellular processes, including cell cycle progression, apoptosis, or DNA damage repair. The polypeptide is 26S proteasome non-ATPase regulatory subunit 1 (Psmd1) (Mus musculus (Mouse)).